The sequence spans 349 residues: Small ribosomal subunit protein uS2 (349 aa).

Belongs to the universal ribosomal protein uS2 family.

In Methylobacterium sp. (strain 4-46), this protein is Small ribosomal subunit protein uS2.